We begin with the raw amino-acid sequence, 286 residues long: Bifunctional protein FolD (286 aa).

NADP(+)-binding positions include 165–167 (GRS), serine 190, and valine 231.

It belongs to the tetrahydrofolate dehydrogenase/cyclohydrolase family. In terms of assembly, homodimer.

The catalysed reaction is (6R)-5,10-methylene-5,6,7,8-tetrahydrofolate + NADP(+) = (6R)-5,10-methenyltetrahydrofolate + NADPH. The enzyme catalyses (6R)-5,10-methenyltetrahydrofolate + H2O = (6R)-10-formyltetrahydrofolate + H(+). The protein operates within one-carbon metabolism; tetrahydrofolate interconversion. Catalyzes the oxidation of 5,10-methylenetetrahydrofolate to 5,10-methenyltetrahydrofolate and then the hydrolysis of 5,10-methenyltetrahydrofolate to 10-formyltetrahydrofolate. This is Bifunctional protein FolD from Bacillus cereus (strain B4264).